The sequence spans 233 residues: 2-C-methyl-D-erythritol 4-phosphate cytidylyltransferase (233 aa).

Belongs to the IspD/TarI cytidylyltransferase family. IspD subfamily.

The catalysed reaction is 2-C-methyl-D-erythritol 4-phosphate + CTP + H(+) = 4-CDP-2-C-methyl-D-erythritol + diphosphate. The protein operates within isoprenoid biosynthesis; isopentenyl diphosphate biosynthesis via DXP pathway; isopentenyl diphosphate from 1-deoxy-D-xylulose 5-phosphate: step 2/6. In terms of biological role, catalyzes the formation of 4-diphosphocytidyl-2-C-methyl-D-erythritol from CTP and 2-C-methyl-D-erythritol 4-phosphate (MEP). This chain is 2-C-methyl-D-erythritol 4-phosphate cytidylyltransferase, found in Lachnoclostridium phytofermentans (strain ATCC 700394 / DSM 18823 / ISDg) (Clostridium phytofermentans).